The chain runs to 347 residues: S-adenosylmethionine:tRNA ribosyltransferase-isomerase (347 aa).

Belongs to the QueA family. Monomer.

The protein localises to the cytoplasm. It carries out the reaction 7-aminomethyl-7-carbaguanosine(34) in tRNA + S-adenosyl-L-methionine = epoxyqueuosine(34) in tRNA + adenine + L-methionine + 2 H(+). The protein operates within tRNA modification; tRNA-queuosine biosynthesis. Transfers and isomerizes the ribose moiety from AdoMet to the 7-aminomethyl group of 7-deazaguanine (preQ1-tRNA) to give epoxyqueuosine (oQ-tRNA). The polypeptide is S-adenosylmethionine:tRNA ribosyltransferase-isomerase (Streptococcus thermophilus (strain CNRZ 1066)).